Consider the following 91-residue polypeptide: Probable Fe(2+)-trafficking protein (91 aa).

This sequence belongs to the Fe(2+)-trafficking protein family.

In terms of biological role, could be a mediator in iron transactions between iron acquisition and iron-requiring processes, such as synthesis and/or repair of Fe-S clusters in biosynthetic enzymes. This is Probable Fe(2+)-trafficking protein from Paraburkholderia phytofirmans (strain DSM 17436 / LMG 22146 / PsJN) (Burkholderia phytofirmans).